A 949-amino-acid polypeptide reads, in one-letter code: Glycine dehydrogenase (decarboxylating) (949 aa).

At Lys704 the chain carries N6-(pyridoxal phosphate)lysine.

This sequence belongs to the GcvP family. As to quaternary structure, the glycine cleavage system is composed of four proteins: P, T, L and H. Pyridoxal 5'-phosphate is required as a cofactor.

The enzyme catalyses N(6)-[(R)-lipoyl]-L-lysyl-[glycine-cleavage complex H protein] + glycine + H(+) = N(6)-[(R)-S(8)-aminomethyldihydrolipoyl]-L-lysyl-[glycine-cleavage complex H protein] + CO2. In terms of biological role, the glycine cleavage system catalyzes the degradation of glycine. The P protein binds the alpha-amino group of glycine through its pyridoxal phosphate cofactor; CO(2) is released and the remaining methylamine moiety is then transferred to the lipoamide cofactor of the H protein. This Bacteroides thetaiotaomicron (strain ATCC 29148 / DSM 2079 / JCM 5827 / CCUG 10774 / NCTC 10582 / VPI-5482 / E50) protein is Glycine dehydrogenase (decarboxylating).